The following is a 157-amino-acid chain: Nicotinate dehydrogenase subunit A (157 aa).

The 77-residue stretch at T3 to L79 folds into the 2Fe-2S ferredoxin-type domain. Residues C41, C46, C49, and C61 each contribute to the [2Fe-2S] cluster site.

The cofactor is [2Fe-2S] cluster.

The enzyme catalyses 2 Fe(III)-[cytochrome] + nicotinate + H2O = 2 Fe(II)-[cytochrome] + 6-hydroxynicotinate + 2 H(+). The protein operates within cofactor degradation; nicotinate degradation. Subunit of the two-component enzyme NicAB that mediates nicotinate hydroxylation, the first step in the aerobic nicotinate degradation pathway. Mediates conversion of nicotinate into 6-hydroxynicotinate (6HNA). In Pseudomonas putida (strain ATCC 47054 / DSM 6125 / CFBP 8728 / NCIMB 11950 / KT2440), this protein is Nicotinate dehydrogenase subunit A (nicA).